Consider the following 468-residue polypeptide: Bifunctional protein GlmU (468 aa).

Positions 1-233 (MAQAGSASPL…LEEANLVNDR (233 aa)) are pyrophosphorylase. Residues 15–18 (LAAG), lysine 29, glutamine 79, and 84–85 (GT) each bind UDP-N-acetyl-alpha-D-glucosamine. Residue aspartate 109 participates in Mg(2+) binding. UDP-N-acetyl-alpha-D-glucosamine-binding residues include glycine 146, glutamate 159, asparagine 174, and asparagine 231. Asparagine 231 is a binding site for Mg(2+). Residues 234–254 (SQLARAEEILRRRILDAHMKE) are linker. The interval 255 to 468 (GVTVRDPVST…GDRRRARTEG (214 aa)) is N-acetyltransferase. The UDP-N-acetyl-alpha-D-glucosamine site is built by arginine 336 and lysine 354. Histidine 366 acts as the Proton acceptor in catalysis. 2 residues coordinate UDP-N-acetyl-alpha-D-glucosamine: tyrosine 369 and asparagine 380. Residues alanine 383, 389–390 (NY), and alanine 426 each bind acetyl-CoA.

It in the N-terminal section; belongs to the N-acetylglucosamine-1-phosphate uridyltransferase family. The protein in the C-terminal section; belongs to the transferase hexapeptide repeat family. As to quaternary structure, homotrimer. Mg(2+) serves as cofactor.

The protein localises to the cytoplasm. It carries out the reaction alpha-D-glucosamine 1-phosphate + acetyl-CoA = N-acetyl-alpha-D-glucosamine 1-phosphate + CoA + H(+). It catalyses the reaction N-acetyl-alpha-D-glucosamine 1-phosphate + UTP + H(+) = UDP-N-acetyl-alpha-D-glucosamine + diphosphate. It functions in the pathway nucleotide-sugar biosynthesis; UDP-N-acetyl-alpha-D-glucosamine biosynthesis; N-acetyl-alpha-D-glucosamine 1-phosphate from alpha-D-glucosamine 6-phosphate (route II): step 2/2. Its pathway is nucleotide-sugar biosynthesis; UDP-N-acetyl-alpha-D-glucosamine biosynthesis; UDP-N-acetyl-alpha-D-glucosamine from N-acetyl-alpha-D-glucosamine 1-phosphate: step 1/1. It participates in bacterial outer membrane biogenesis; LPS lipid A biosynthesis. In terms of biological role, catalyzes the last two sequential reactions in the de novo biosynthetic pathway for UDP-N-acetylglucosamine (UDP-GlcNAc). The C-terminal domain catalyzes the transfer of acetyl group from acetyl coenzyme A to glucosamine-1-phosphate (GlcN-1-P) to produce N-acetylglucosamine-1-phosphate (GlcNAc-1-P), which is converted into UDP-GlcNAc by the transfer of uridine 5-monophosphate (from uridine 5-triphosphate), a reaction catalyzed by the N-terminal domain. The polypeptide is Bifunctional protein GlmU (Rubrobacter xylanophilus (strain DSM 9941 / JCM 11954 / NBRC 16129 / PRD-1)).